Here is a 372-residue protein sequence, read N- to C-terminus: Putative RING-H2 finger protein ATL21A (372 aa).

An N-terminal signal peptide occupies residues M1–A20. A helical transmembrane segment spans residues I242–V262. The RING-type; atypical zinc-finger motif lies at C320–R362.

The protein belongs to the RING-type zinc finger family. ATL subfamily.

It is found in the membrane. The enzyme catalyses S-ubiquitinyl-[E2 ubiquitin-conjugating enzyme]-L-cysteine + [acceptor protein]-L-lysine = [E2 ubiquitin-conjugating enzyme]-L-cysteine + N(6)-ubiquitinyl-[acceptor protein]-L-lysine.. It functions in the pathway protein modification; protein ubiquitination. The polypeptide is Putative RING-H2 finger protein ATL21A (ATL21A) (Arabidopsis thaliana (Mouse-ear cress)).